A 398-amino-acid polypeptide reads, in one-letter code: Argininosuccinate synthase (398 aa).

A10–S18 is a binding site for ATP. Y87 is an L-citrulline binding site. G117 contributes to the ATP binding site. L-aspartate contacts are provided by T119, N123, and D124. N123 is an L-citrulline binding site. 4 residues coordinate L-citrulline: R127, S175, E260, and Y272.

It belongs to the argininosuccinate synthase family. Type 1 subfamily. Homotetramer.

Its subcellular location is the cytoplasm. The enzyme catalyses L-citrulline + L-aspartate + ATP = 2-(N(omega)-L-arginino)succinate + AMP + diphosphate + H(+). It participates in amino-acid biosynthesis; L-arginine biosynthesis; L-arginine from L-ornithine and carbamoyl phosphate: step 2/3. This Lactococcus lactis subsp. lactis (strain IL1403) (Streptococcus lactis) protein is Argininosuccinate synthase.